Reading from the N-terminus, the 392-residue chain is Zinc finger protein ham-2 (392 aa).

2 consecutive C2H2-type zinc fingers follow at residues 16-39 and 43-66; these read FPCSICQKVFCHSSSLSRHRMQAH and YTCTTCNNEIPSNDTLRSHMYRVH. The C2H2-type 3; degenerate zinc finger occupies 72-95; the sequence is FMCRCCNWAFPDKTSLHIHMQSML. 2 disordered regions span residues 106-130 and 278-303; these read LAKSSDVVDSTSESGSPRQSPPFSP and HISHDQPSPTVSDSHISGGSSSHSGE. Residues 112–123 show a composition bias toward polar residues; that stretch reads VVDSTSESGSPR. A compositionally biased stretch (low complexity) spans 289–303; that stretch reads SDSHISGGSSSHSGE.

Its subcellular location is the nucleus. In terms of biological role, probable transcription factor that acts downstream of egl-15, to promote migration of the HSN motor neurons from the tail to the gonad primordium during HSN cell differentiation. In Caenorhabditis elegans, this protein is Zinc finger protein ham-2.